The following is a 104-amino-acid chain: L-rhamnose mutarotase (104 aa).

Substrate is bound at residue Y18. Catalysis depends on H22, which acts as the Proton donor. Substrate-binding positions include Y41 and 76–77 (WW).

It belongs to the rhamnose mutarotase family. In terms of assembly, homodimer.

Its subcellular location is the cytoplasm. It carries out the reaction alpha-L-rhamnose = beta-L-rhamnose. It functions in the pathway carbohydrate metabolism; L-rhamnose metabolism. In terms of biological role, involved in the anomeric conversion of L-rhamnose. This is L-rhamnose mutarotase from Salmonella newport (strain SL254).